The following is a 258-amino-acid chain: UDP-2,3-diacylglucosamine hydrolase (258 aa).

Mn(2+) is bound by residues D15, H17, D48, N88, and H123. 88 to 89 contacts substrate; that stretch reads NR. The substrate site is built by D131, S169, N173, K176, and H204. Residues H204 and H206 each coordinate Mn(2+).

It belongs to the LpxH family. The cofactor is Mn(2+).

Its subcellular location is the cell inner membrane. It carries out the reaction UDP-2-N,3-O-bis[(3R)-3-hydroxytetradecanoyl]-alpha-D-glucosamine + H2O = 2-N,3-O-bis[(3R)-3-hydroxytetradecanoyl]-alpha-D-glucosaminyl 1-phosphate + UMP + 2 H(+). Its pathway is glycolipid biosynthesis; lipid IV(A) biosynthesis; lipid IV(A) from (3R)-3-hydroxytetradecanoyl-[acyl-carrier-protein] and UDP-N-acetyl-alpha-D-glucosamine: step 4/6. Functionally, hydrolyzes the pyrophosphate bond of UDP-2,3-diacylglucosamine to yield 2,3-diacylglucosamine 1-phosphate (lipid X) and UMP by catalyzing the attack of water at the alpha-P atom. Involved in the biosynthesis of lipid A, a phosphorylated glycolipid that anchors the lipopolysaccharide to the outer membrane of the cell. The polypeptide is UDP-2,3-diacylglucosamine hydrolase (Bordetella bronchiseptica (strain ATCC BAA-588 / NCTC 13252 / RB50) (Alcaligenes bronchisepticus)).